A 371-amino-acid polypeptide reads, in one-letter code: Isopentenyl-diphosphate delta-isomerase (371 aa).

9–10 lines the substrate pocket; that stretch reads RK. FMN-binding positions include threonine 66, 67–69, serine 100, and asparagine 128; that span reads GMT. 100–102 contributes to the substrate binding site; that stretch reads SQR. Substrate is bound at residue glutamine 167. Residue glutamate 168 coordinates Mg(2+). FMN is bound by residues lysine 199, serine 224, threonine 229, 278-280, and 299-300; these read GMR and AL.

This sequence belongs to the IPP isomerase type 2 family. As to quaternary structure, homooctamer. Dimer of tetramers. It depends on FMN as a cofactor. NADPH serves as cofactor. Mg(2+) is required as a cofactor.

The protein localises to the cytoplasm. The enzyme catalyses isopentenyl diphosphate = dimethylallyl diphosphate. In terms of biological role, involved in the biosynthesis of isoprenoids. Catalyzes the 1,3-allylic rearrangement of the homoallylic substrate isopentenyl (IPP) to its allylic isomer, dimethylallyl diphosphate (DMAPP). The sequence is that of Isopentenyl-diphosphate delta-isomerase from Pyrococcus horikoshii (strain ATCC 700860 / DSM 12428 / JCM 9974 / NBRC 100139 / OT-3).